Here is a 1023-residue protein sequence, read N- to C-terminus: Probable histidine kinase 3 (1023 aa).

Residues 1–80 (MDEMSCGGGG…RGWRVVRETW (80 aa)) are Cytoplasmic-facing. A helical membrane pass occupies residues 81–101 (WWVLLLWILAGSLGSFYLFLF). Topologically, residues 102-387 (MNAQSLDKRR…CRFEKKPPWP (286 aa)) are extracellular. The 202-residue stretch at 151–352 (TPSAIDQMTF…TNESPISMYG (202 aa)) folds into the CHASE domain. A helical transmembrane segment spans residues 388–408 (WLAITSSFGTLVIALLTGHIF). Residues 409–1023 (QATVHRIAKV…RFFQNHDQVE (615 aa)) are Cytoplasmic-facing. Residues 445–715 (TVSHEIRTPM…TFTFTAVLMR (271 aa)) form the Histidine kinase domain. Position 448 is a phosphohistidine; by autocatalysis (His448). Response regulatory domains are found at residues 732-854 (NALV…RRAL) and 880-1016 (QIIV…ARFF). Asp783 is modified (4-aspartylphosphate). The disordered stretch occupies residues 812-831 (LFLLGSSASSPKGGSDTSRE). Over residues 817 to 827 (SSASSPKGGSD) the composition is skewed to polar residues. The residue at position 930 (Asp930) is a 4-aspartylphosphate.

Activation probably requires a transfer of a phosphate group between a His in the transmitter domain and an Asp of the receiver domain. In terms of tissue distribution, highly expressed in young leaves and at lower levels in roots, mature leaves, stems and spikelets.

The protein localises to the cell membrane. The catalysed reaction is ATP + protein L-histidine = ADP + protein N-phospho-L-histidine.. Cytokinin receptor related to bacterial two-component regulators. Functions as a histidine kinase and transmits the stress signal to a downstream MAPK cascade. The chain is Probable histidine kinase 3 from Oryza sativa subsp. japonica (Rice).